The sequence spans 543 residues: 2-succinyl-5-enolpyruvyl-6-hydroxy-3-cyclohexene-1-carboxylate synthase (543 aa).

This sequence belongs to the TPP enzyme family. MenD subfamily. Homodimer. The cofactor is Mg(2+). It depends on Mn(2+) as a cofactor. Thiamine diphosphate is required as a cofactor.

The enzyme catalyses isochorismate + 2-oxoglutarate + H(+) = 5-enolpyruvoyl-6-hydroxy-2-succinyl-cyclohex-3-ene-1-carboxylate + CO2. It participates in quinol/quinone metabolism; 1,4-dihydroxy-2-naphthoate biosynthesis; 1,4-dihydroxy-2-naphthoate from chorismate: step 2/7. It functions in the pathway quinol/quinone metabolism; menaquinone biosynthesis. Catalyzes the thiamine diphosphate-dependent decarboxylation of 2-oxoglutarate and the subsequent addition of the resulting succinic semialdehyde-thiamine pyrophosphate anion to isochorismate to yield 2-succinyl-5-enolpyruvyl-6-hydroxy-3-cyclohexene-1-carboxylate (SEPHCHC). The protein is 2-succinyl-5-enolpyruvyl-6-hydroxy-3-cyclohexene-1-carboxylate synthase of Corynebacterium glutamicum (strain R).